A 185-amino-acid chain; its full sequence is MANAIVEKAKERMSHSHQNLAREFGAVRAGRANASLLDRISVEYYGVETPLNQIASITIPEARVLLVTPFDKSSLKDIERAINASDLGITPASDGSVIRLVIPALTEETRRDLAKEVKKIGENAKIAIRNIRRDAMDEAKKQEKAKEITEDELKTLEKDIQKVTDDAVKHIDEMTAHKEKELLEV.

The protein belongs to the RRF family.

The protein resides in the cytoplasm. Responsible for the release of ribosomes from messenger RNA at the termination of protein biosynthesis. May increase the efficiency of translation by recycling ribosomes from one round of translation to another. The chain is Ribosome-recycling factor from Streptococcus gordonii (strain Challis / ATCC 35105 / BCRC 15272 / CH1 / DL1 / V288).